The following is a 332-amino-acid chain: 2,3-diketo-L-gulonate reductase (332 aa).

Catalysis depends on His-44, which acts as the Proton donor. NAD(+)-binding positions include 168–174 (ITMVDMS), 224–225 (WK), and 304–306 (GHE).

It belongs to the LDH2/MDH2 oxidoreductase family. DlgD subfamily. In terms of assembly, homodimer.

It localises to the cytoplasm. It carries out the reaction 3-dehydro-L-gulonate + NAD(+) = 2,3-dioxo-L-gulonate + NADH + H(+). It catalyses the reaction 3-dehydro-L-gulonate + NADP(+) = 2,3-dioxo-L-gulonate + NADPH + H(+). In terms of biological role, catalyzes the reduction of 2,3-diketo-L-gulonate in the presence of NADH, to form 3-keto-L-gulonate. The chain is 2,3-diketo-L-gulonate reductase from Escherichia coli O127:H6 (strain E2348/69 / EPEC).